The sequence spans 299 residues: Leucine zipper transcription factor-like protein 1 (299 aa).

Residues 96–296 (LKLQTDISEL…DLRKRLAQYE (201 aa)) are a coiled coil. The interaction with BSS9 stretch occupies residues 145–299 (GTAELLNKEI…KRLAQYEPED (155 aa)).

The protein belongs to the LZTFL1 family. Self-associates. Interacts with BBS9; the interaction mediates the association of LZTL1 with the BBsome complex and regulates BBSome ciliary trafficking.

It is found in the cytoplasm. Regulates ciliary localization of the BBSome complex. Together with the BBSome complex, controls SMO ciliary trafficking and contributes to the sonic hedgehog (SHH) pathway regulation. May play a role in neurite outgrowth. May have tumor suppressor function. This chain is Leucine zipper transcription factor-like protein 1 (LZTFL1), found in Pongo abelii (Sumatran orangutan).